The primary structure comprises 358 residues: Ethanol acetyltransferase 1 (358 aa).

Residues 59-166 (PIVFIHGLFG…NAPINQPHIS (108 aa)) form the AB hydrolase-1 domain. Active-site charge relay system residues include Ser132, Asp156, and His305.

This sequence belongs to the AB hydrolase superfamily.

Its subcellular location is the mitochondrion. It catalyses the reaction ethanol + acetyl-CoA = ethyl acetate + CoA. It carries out the reaction acetyl-CoA + H2O = acetate + CoA + H(+). The enzyme catalyses ethyl acetate + H2O = ethanol + acetate + H(+). Functionally, alcohol acetyltransferase that catalyzes the synthesis of ethyl acetate from ethanol and acetyl-CoA. Can also function as a thioesterase by hydrolyzing acetyl-CoA in the absence of ethanol, as well as esterase hydrolyzing ethyl acetate. The polypeptide is Ethanol acetyltransferase 1 (EAT1) (Eremothecium cymbalariae (strain CBS 270.75 / DBVPG 7215 / KCTC 17166 / NRRL Y-17582) (Yeast)).